The sequence spans 599 residues: Elongation factor 4 (599 aa).

One can recognise a tr-type G domain in the interval 4–186; it reads ENIRNFSIIA…EIVKKIPPPE (183 aa). Residues 16–21 and 133–136 contribute to the GTP site; these read DHGKST and NKID.

This sequence belongs to the TRAFAC class translation factor GTPase superfamily. Classic translation factor GTPase family. LepA subfamily.

It localises to the cell inner membrane. It catalyses the reaction GTP + H2O = GDP + phosphate + H(+). Its function is as follows. Required for accurate and efficient protein synthesis under certain stress conditions. May act as a fidelity factor of the translation reaction, by catalyzing a one-codon backward translocation of tRNAs on improperly translocated ribosomes. Back-translocation proceeds from a post-translocation (POST) complex to a pre-translocation (PRE) complex, thus giving elongation factor G a second chance to translocate the tRNAs correctly. Binds to ribosomes in a GTP-dependent manner. This chain is Elongation factor 4, found in Geobacter metallireducens (strain ATCC 53774 / DSM 7210 / GS-15).